Consider the following 499-residue polypeptide: UDP-N-acetylmuramoylalanine--D-glutamate ligase (499 aa).

128–134 (GTNGKTT) serves as a coordination point for ATP.

This sequence belongs to the MurCDEF family.

It is found in the cytoplasm. The catalysed reaction is UDP-N-acetyl-alpha-D-muramoyl-L-alanine + D-glutamate + ATP = UDP-N-acetyl-alpha-D-muramoyl-L-alanyl-D-glutamate + ADP + phosphate + H(+). Its pathway is cell wall biogenesis; peptidoglycan biosynthesis. Functionally, cell wall formation. Catalyzes the addition of glutamate to the nucleotide precursor UDP-N-acetylmuramoyl-L-alanine (UMA). This chain is UDP-N-acetylmuramoylalanine--D-glutamate ligase, found in Rhodococcus jostii (strain RHA1).